Consider the following 832-residue polypeptide: Putative beta-glucosidase (832 aa).

D225 is an active-site residue. One can recognise a PA14 domain in the interval 397-556; sequence TGKHGYVAKF…DPETEIDYAV (160 aa).

The protein belongs to the glycosyl hydrolase 3 family.

The protein resides in the cytoplasm. The catalysed reaction is Hydrolysis of terminal, non-reducing beta-D-glucosyl residues with release of beta-D-glucose.. This is Putative beta-glucosidase from Schizosaccharomyces pombe (strain 972 / ATCC 24843) (Fission yeast).